The following is a 569-amino-acid chain: Santalene synthase (569 aa).

Residues Arg-284, Asp-321, Asp-325, and Arg-460 each coordinate (2E)-geranyl diphosphate. Mg(2+)-binding residues include Asp-321 and Asp-325. The DDXXD motif motif lies at 321 to 325 (DDAYD). Asn-463, Thr-467, and Glu-471 together coordinate Mg(2+).

This sequence belongs to the terpene synthase family. Tpsb subfamily. Requires Mg(2+) as cofactor. The cofactor is Mn(2+).

The enzyme catalyses (2E,6E)-farnesyl diphosphate = (1S,5S,6R)-alpha-bergamotene + diphosphate. The catalysed reaction is (2E,6E)-farnesyl diphosphate = (+)-alpha-santalene + diphosphate. It catalyses the reaction (2E,6E)-farnesyl diphosphate = (-)-beta-santalene + diphosphate. Functionally, catalyzes a mixture of sesquiterpenoids from (2E,6E)-farnesyl diphosphate in fragrance biosynthesis. Catalyzes the formation of alpha-santalene, beta-santalene, epi-beta-santalene and exo-alpha-bergamotene, as well as traces of alpha-farnesene and beta-farnesene. This is Santalene synthase from Santalum austrocaledonicum (Sandalwood).